Here is a 546-residue protein sequence, read N- to C-terminus: CTP synthase (546 aa).

Residues 1 to 269 (MRSKKTKFIF…DERLAEVLNI (269 aa)) are amidoligase domain. Residue Ser-17 coordinates CTP. Ser-17 contributes to the UTP binding site. Residues 18 to 23 (SLGKGL) and Asp-75 contribute to the ATP site. 2 residues coordinate Mg(2+): Asp-75 and Glu-143. CTP is bound by residues 150-152 (DIE), 190-195 (KTKPTQ), and Lys-226. UTP-binding positions include 190 to 195 (KTKPTQ) and Lys-226. The 243-residue stretch at 295–537 (RIAIVGKYVN…IRAALAQRDA (243 aa)) folds into the Glutamine amidotransferase type-1 domain. Residue Gly-357 coordinates L-glutamine. Cys-384 serves as the catalytic Nucleophile; for glutamine hydrolysis. L-glutamine is bound by residues 385–388 (LGLQ), Glu-408, and Arg-465. Active-site residues include His-510 and Glu-512.

This sequence belongs to the CTP synthase family. As to quaternary structure, homotetramer.

The enzyme catalyses UTP + L-glutamine + ATP + H2O = CTP + L-glutamate + ADP + phosphate + 2 H(+). The catalysed reaction is L-glutamine + H2O = L-glutamate + NH4(+). It catalyses the reaction UTP + NH4(+) + ATP = CTP + ADP + phosphate + 2 H(+). The protein operates within pyrimidine metabolism; CTP biosynthesis via de novo pathway; CTP from UDP: step 2/2. With respect to regulation, allosterically activated by GTP, when glutamine is the substrate; GTP has no effect on the reaction when ammonia is the substrate. The allosteric effector GTP functions by stabilizing the protein conformation that binds the tetrahedral intermediate(s) formed during glutamine hydrolysis. Inhibited by the product CTP, via allosteric rather than competitive inhibition. Its function is as follows. Catalyzes the ATP-dependent amination of UTP to CTP with either L-glutamine or ammonia as the source of nitrogen. Regulates intracellular CTP levels through interactions with the four ribonucleotide triphosphates. This chain is CTP synthase, found in Myxococcus xanthus (strain DK1622).